Here is a 526-residue protein sequence, read N- to C-terminus: Probable feruloyl esterase B-2 (526 aa).

An N-terminal signal peptide occupies residues 1–18; the sequence is MTKLSLLPLLTLASAVLA. Disulfide bonds link Cys27/Cys74 and Cys62/Cys113. Residue Asn52 is glycosylated (N-linked (GlcNAc...) asparagine). The N-linked (GlcNAc...) asparagine glycan is linked to Asn137. 4 cysteine pairs are disulfide-bonded: Cys186/Cys441, Cys255/Cys272, Cys281/Cys291, and Cys503/Cys525. The active-site Acyl-ester intermediate is Ser187. N-linked (GlcNAc...) asparagine glycosylation is present at Asn233. Ca(2+)-binding residues include Asp256, Asp259, Ala261, Asp263, and Ile265. Catalysis depends on charge relay system residues Asp400 and His440. Asn516 carries an N-linked (GlcNAc...) asparagine glycan.

The protein belongs to the tannase family.

The protein resides in the secreted. It catalyses the reaction feruloyl-polysaccharide + H2O = ferulate + polysaccharide.. In terms of biological role, involved in degradation of plant cell walls. Hydrolyzes the feruloyl-arabinose ester bond in arabinoxylans as well as the feruloyl-galactose and feruloyl-arabinose ester bonds in pectin. This chain is Probable feruloyl esterase B-2 (faeB-2), found in Aspergillus fumigatus (strain ATCC MYA-4609 / CBS 101355 / FGSC A1100 / Af293) (Neosartorya fumigata).